The following is a 112-amino-acid chain: uncharacterized protein (112 aa).

The disordered stretch occupies residues 70 to 112 (GLYRGRRPPGRDAARPTTAILFAQGRPPLLDQRAPTRRGSHQR).

This is an uncharacterized protein from Homo sapiens (Human).